The following is a 326-amino-acid chain: Cyclin-dependent kinase 1 (326 aa).

The region spanning 16-306 is the Protein kinase domain; sequence FTKLEKIGEG…SKKALHHPYF (291 aa). ATP contacts are provided by residues 22-30 and lysine 45; that span reads IGEGTYGVV. The Proton acceptor role is filled by aspartate 140.

Belongs to the protein kinase superfamily. CMGC Ser/Thr protein kinase family. CDC2/CDKX subfamily. In terms of assembly, forms a stable but non-covalent complex with a regulatory subunit and with a cyclin. Interacts with cks-1.

Its subcellular location is the nucleus. The protein localises to the cytoplasm. It is found in the cytoskeleton. The protein resides in the microtubule organizing center. It localises to the centrosome. The catalysed reaction is L-seryl-[protein] + ATP = O-phospho-L-seryl-[protein] + ADP + H(+). It carries out the reaction L-threonyl-[protein] + ATP = O-phospho-L-threonyl-[protein] + ADP + H(+). It catalyses the reaction [DNA-directed RNA polymerase] + ATP = phospho-[DNA-directed RNA polymerase] + ADP + H(+). Its activity is regulated as follows. Phosphorylation both activates and inactivates the enzyme depending on the site of phosphorylation. Functionally, plays a key role in the control of the eukaryotic cell cycle. Required for entry into S-phase and mitosis. Acts as a component of the kinase complex that phosphorylates the repetitive C-terminus of RNA polymerase II. May function in concert with npp-16 to arrest prophase blastomeres in response to anoxia. The sequence is that of Cyclin-dependent kinase 1 from Caenorhabditis briggsae.